The primary structure comprises 172 residues: Zinc finger C2HC domain-containing protein 1B (172 aa).

C2HC/C3H-type zinc fingers lie at residues 14–43 (KLFP…VFNK) and 117–146 (DYIQ…QTSR). Residues C18, C21, H33, C37, C121, C124, H136, and C140 each coordinate Zn(2+).

This sequence belongs to the ZC2HC1 family. Zn(2+) is required as a cofactor.

This is Zinc finger C2HC domain-containing protein 1B (Zc2hc1b) from Mus musculus (Mouse).